Reading from the N-terminus, the 149-residue chain is Arginine repressor (149 aa).

This sequence belongs to the ArgR family.

The protein localises to the cytoplasm. The protein operates within amino-acid biosynthesis; L-arginine biosynthesis [regulation]. In terms of biological role, regulates arginine biosynthesis genes. This Listeria welshimeri serovar 6b (strain ATCC 35897 / DSM 20650 / CCUG 15529 / CIP 8149 / NCTC 11857 / SLCC 5334 / V8) protein is Arginine repressor.